The chain runs to 142 residues: 3-hydroxyacyl-[acyl-carrier-protein] dehydratase FabZ (142 aa).

Histidine 46 is a catalytic residue.

This sequence belongs to the thioester dehydratase family. FabZ subfamily.

The protein localises to the cytoplasm. It carries out the reaction a (3R)-hydroxyacyl-[ACP] = a (2E)-enoyl-[ACP] + H2O. Involved in unsaturated fatty acids biosynthesis. Catalyzes the dehydration of short chain beta-hydroxyacyl-ACPs and long chain saturated and unsaturated beta-hydroxyacyl-ACPs. The protein is 3-hydroxyacyl-[acyl-carrier-protein] dehydratase FabZ of Thermus thermophilus (strain ATCC BAA-163 / DSM 7039 / HB27).